The chain runs to 517 residues: MATLAPPPSKRQRREEIQRTQTQQDVTPLVATDLGSFKANFIDSDGNQMTDVVEINFADATEKNISNLLNTLLGRDREEFTPYRFRIHIPGKDLIIDQYPNDLLSLLQKHGVTNPFETTITLSAEPQAIFKVHAVSRLAHRIPGHGQPILSCQFSPVSSSRLATGSGDNTARIWDTDSGTPKFTLKGHTGWVLGVSWSPDGKYLATCSMDTTVRVWDPESGKQVNQEFRGHAKWVLALAWQPYHLWRDGTARLASASKDCTVRIWLVNTGRTEHVLSGHKGSVSCVKWGGTDLIYTGSHDRSVRVWDAVKGTLVHNFTAHGHWVNHIALSSDHVLRTAYHDHTKEVPGTEEERRAKAKERFEKAAKIKGKVAERLVSASDDFTMYLWDPTNNGSKPVARLLGHQNKVNHVQFSPDGTLIASAGWDNSTKLWNARDGKFIKNLRGHVAPVYQCAWSADSRLVVTGSKDCTLKVWNVRTGKLAMDLPGHEDEVYAVDWAADGELVASGGKDKAVRTWRN.

The interval 1-25 (MATLAPPPSKRQRREEIQRTQTQQD) is disordered. Residues 34-128 (LGSFKANFID…TITLSAEPQA (95 aa)) are ubiquitin-like (UBL) domain. WD repeat units lie at residues 144–184 (GHGQ…PKFT), 187–226 (GHTG…QVNQ), 230–277 (GHAK…HVLS), 278–316 (GHKG…LVHN), 351–397 (EERR…SKPV), 402–441 (GHQN…FIKN), 444–483 (GHVA…LAMD), and 486–517 (GHED…TWRN).

This sequence belongs to the NLE1/RSA4 family. In terms of assembly, associates with the pre-60S ribosomal particle. Interacts (via WD repeats) with uL18. Interacts (via UBL domain) with MDN1 (via VWFA/MIDAS domain). Interacts (via WD repeats) with NSA2.

The protein resides in the nucleus. It is found in the nucleolus. In terms of biological role, involved in ribosome biogenesis. Required for processing and efficient intra-nuclear transport of pre-60S ribosomal subunits. Interacts with the AAA-ATPase Midasin, which is essential for the ATP-dependent dissociation of a group of nonribosomal factors from the pre-60S particle. The sequence is that of Ribosome assembly protein 4 from Chaetomium thermophilum (strain DSM 1495 / CBS 144.50 / IMI 039719) (Thermochaetoides thermophila).